The chain runs to 908 residues: Protein translocase subunit SecA (908 aa).

ATP contacts are provided by residues Gln87, 105–109 (GEGKT), and Asp512. Positions 860–908 (AESLVGSSDEHEAVTAQAPMIRDGEKVGRNDPCPCGSGRKYKQCHGKLS) are disordered. Residues Cys892, Cys894, Cys903, and His904 each coordinate Zn(2+). The span at 898-908 (RKYKQCHGKLS) shows a compositional bias: basic residues.

This sequence belongs to the SecA family. In terms of assembly, monomer and homodimer. Part of the essential Sec protein translocation apparatus which comprises SecA, SecYEG and auxiliary proteins SecDF-YajC and YidC. It depends on Zn(2+) as a cofactor.

It localises to the cell inner membrane. The protein localises to the cytoplasm. It carries out the reaction ATP + H2O + cellular proteinSide 1 = ADP + phosphate + cellular proteinSide 2.. In terms of biological role, part of the Sec protein translocase complex. Interacts with the SecYEG preprotein conducting channel. Has a central role in coupling the hydrolysis of ATP to the transfer of proteins into and across the cell membrane, serving both as a receptor for the preprotein-SecB complex and as an ATP-driven molecular motor driving the stepwise translocation of polypeptide chains across the membrane. The protein is Protein translocase subunit SecA of Shewanella baltica (strain OS155 / ATCC BAA-1091).